The chain runs to 599 residues: Aspartate--tRNA(Asp/Asn) ligase (599 aa).

E172 contacts L-aspartate. Residues 196–199 (QLFK) are aspartate. Residue R218 coordinates L-aspartate. ATP contacts are provided by residues 218–220 (RDE) and Q227. An L-aspartate-binding site is contributed by H454. E488 lines the ATP pocket. Residue R495 participates in L-aspartate binding. 540–543 (GLDR) is a binding site for ATP.

This sequence belongs to the class-II aminoacyl-tRNA synthetase family. Type 1 subfamily. Homodimer.

Its subcellular location is the cytoplasm. The enzyme catalyses tRNA(Asx) + L-aspartate + ATP = L-aspartyl-tRNA(Asx) + AMP + diphosphate. Functionally, aspartyl-tRNA synthetase with relaxed tRNA specificity since it is able to aspartylate not only its cognate tRNA(Asp) but also tRNA(Asn). Reaction proceeds in two steps: L-aspartate is first activated by ATP to form Asp-AMP and then transferred to the acceptor end of tRNA(Asp/Asn). The polypeptide is Aspartate--tRNA(Asp/Asn) ligase (Methylibium petroleiphilum (strain ATCC BAA-1232 / LMG 22953 / PM1)).